A 340-amino-acid chain; its full sequence is Cytosolic Fe-S cluster assembly factor NBP35 (340 aa).

[4Fe-4S] cluster is bound by residues cysteine 31, cysteine 45, cysteine 48, and cysteine 54. 84–91 lines the ATP pocket; that stretch reads GKGGVGKS. Residues cysteine 257 and cysteine 260 each coordinate [4Fe-4S] cluster.

The protein belongs to the Mrp/NBP35 ATP-binding proteins family. NUBP1/NBP35 subfamily. In terms of assembly, heterotetramer of 2 NBP35 and 2 CFD1 chains. It depends on [4Fe-4S] cluster as a cofactor.

The protein localises to the cytoplasm. Component of the cytosolic iron-sulfur (Fe/S) protein assembly (CIA) machinery. Required for maturation of extramitochondrial Fe-S proteins. The NBP35-CFD1 heterotetramer forms a Fe-S scaffold complex, mediating the de novo assembly of an Fe-S cluster and its transfer to target apoproteins. This Phaeosphaeria nodorum (strain SN15 / ATCC MYA-4574 / FGSC 10173) (Glume blotch fungus) protein is Cytosolic Fe-S cluster assembly factor NBP35.